We begin with the raw amino-acid sequence, 37 residues long: Large ribosomal subunit protein bL36 (37 aa).

It belongs to the bacterial ribosomal protein bL36 family.

The sequence is that of Large ribosomal subunit protein bL36 from Borreliella afzelii (strain PKo) (Borrelia afzelii).